A 403-amino-acid polypeptide reads, in one-letter code: S-adenosylmethionine synthase (403 aa).

Residue His15 coordinates ATP. Asp17 is a Mg(2+) binding site. Residue Glu43 participates in K(+) binding. Positions 56 and 99 each coordinate L-methionine. A flexible loop region spans residues 99–109; sequence QSPHIAQGVDR. Residues 166 to 168, 232 to 233, Asp241, 247 to 248, Ala264, and Lys268 contribute to the ATP site; these read DAK, KF, and RK. Residue Asp241 participates in L-methionine binding. Lys272 contacts L-methionine.

The protein belongs to the AdoMet synthase family. In terms of assembly, homotetramer; dimer of dimers. The cofactor is Mg(2+). K(+) is required as a cofactor.

The protein resides in the cytoplasm. It carries out the reaction L-methionine + ATP + H2O = S-adenosyl-L-methionine + phosphate + diphosphate. It functions in the pathway amino-acid biosynthesis; S-adenosyl-L-methionine biosynthesis; S-adenosyl-L-methionine from L-methionine: step 1/1. Functionally, catalyzes the formation of S-adenosylmethionine (AdoMet) from methionine and ATP. The overall synthetic reaction is composed of two sequential steps, AdoMet formation and the subsequent tripolyphosphate hydrolysis which occurs prior to release of AdoMet from the enzyme. The chain is S-adenosylmethionine synthase from Stenotrophomonas maltophilia (strain R551-3).